The chain runs to 134 residues: Ribosome-binding factor A (134 aa).

The protein belongs to the RbfA family. Monomer. Binds 30S ribosomal subunits, but not 50S ribosomal subunits or 70S ribosomes.

It is found in the cytoplasm. In terms of biological role, one of several proteins that assist in the late maturation steps of the functional core of the 30S ribosomal subunit. Associates with free 30S ribosomal subunits (but not with 30S subunits that are part of 70S ribosomes or polysomes). Required for efficient processing of 16S rRNA. May interact with the 5'-terminal helix region of 16S rRNA. The sequence is that of Ribosome-binding factor A from Synechococcus sp. (strain CC9311).